The following is a 63-amino-acid chain: uncharacterized protein (63 aa).

This is an uncharacterized protein from Dictyostelium discoideum (Social amoeba).